A 336-amino-acid chain; its full sequence is MGGTKLTHVTTTNPNNSNIHGPVVDEVEGLIKVYKDGHVERSQLLPCVDPSLPLELGVTCSDVVIDKLTNVWARLYVPMTTTKSSVSKLPLIVYFHGGGFCVGSASWLCYHEFLARLSARSRCLVMSVNYRLAPENPLPAAYEDGVNAILWLNKARNDNLWAKQCDFGRIFLAGDSAGGNIAQQVAARLASPEDLALKIEGTILIQPFYSGEERTESERRVGNDKTAVLTLASSDAWWRMSLPRGANREHPYCKPVKMIIKSSTVTRTLVCVAEMDLLMDSNMEMCDGNEDVIKRVLHKGVGHAFHILGKSQLAHTTTLEMLCQIDAFIHHYDPLN.

Residues 1-20 (MGGTKLTHVTTTNPNNSNIH) are disordered. Residues 7–19 (THVTTTNPNNSNI) show a composition bias toward polar residues. An Involved in the stabilization of the negatively charged intermediate by the formation of the oxyanion hole motif is present at residues 96–98 (HGG). Residues serine 176, aspartate 276, and histidine 303 contribute to the active site.

Belongs to the 'GDXG' lipolytic enzyme family. Expressed in roots, leaves, flowers and siliques.

It carries out the reaction a carboxylic ester + H2O = an alcohol + a carboxylate + H(+). In terms of biological role, carboxylesterase acting on esters with varying acyl chain length. The polypeptide is Probable carboxylesterase 6 (CXE6) (Arabidopsis thaliana (Mouse-ear cress)).